We begin with the raw amino-acid sequence, 250 residues long: Imidazole glycerol phosphate synthase subunit HisF (250 aa).

Residues Asp11 and Asp130 contribute to the active site.

It belongs to the HisA/HisF family. As to quaternary structure, heterodimer of HisH and HisF.

Its subcellular location is the cytoplasm. It catalyses the reaction 5-[(5-phospho-1-deoxy-D-ribulos-1-ylimino)methylamino]-1-(5-phospho-beta-D-ribosyl)imidazole-4-carboxamide + L-glutamine = D-erythro-1-(imidazol-4-yl)glycerol 3-phosphate + 5-amino-1-(5-phospho-beta-D-ribosyl)imidazole-4-carboxamide + L-glutamate + H(+). The protein operates within amino-acid biosynthesis; L-histidine biosynthesis; L-histidine from 5-phospho-alpha-D-ribose 1-diphosphate: step 5/9. In terms of biological role, IGPS catalyzes the conversion of PRFAR and glutamine to IGP, AICAR and glutamate. The HisF subunit catalyzes the cyclization activity that produces IGP and AICAR from PRFAR using the ammonia provided by the HisH subunit. The polypeptide is Imidazole glycerol phosphate synthase subunit HisF (Elusimicrobium minutum (strain Pei191)).